A 228-amino-acid chain; its full sequence is Protein slowmo homolog (228 aa).

One can recognise a PRELI/MSF1 domain in the interval 1 to 172 (MPLFETIKHT…TIIKVQKEAE (172 aa)).

This sequence belongs to the slowmo family.

This Dictyostelium discoideum (Social amoeba) protein is Protein slowmo homolog (slmo).